A 143-amino-acid chain; its full sequence is Large ribosomal subunit protein uL11 (143 aa).

It belongs to the universal ribosomal protein uL11 family. In terms of assembly, part of the ribosomal stalk of the 50S ribosomal subunit. Interacts with L10 and the large rRNA to form the base of the stalk. L10 forms an elongated spine to which L12 dimers bind in a sequential fashion forming a multimeric L10(L12)X complex. In terms of processing, one or more lysine residues are methylated.

Functionally, forms part of the ribosomal stalk which helps the ribosome interact with GTP-bound translation factors. The protein is Large ribosomal subunit protein uL11 of Delftia acidovorans (strain DSM 14801 / SPH-1).